The sequence spans 289 residues: Acetyl-coenzyme A carboxylase carboxyl transferase subunit beta (289 aa).

Residues 36–289 (MWLRCPHCHQ…LLKTGSVANE (254 aa)) form the CoA carboxyltransferase N-terminal domain. Cys40, Cys43, Cys58, and Cys61 together coordinate Zn(2+). The segment at 40–61 (CPHCHQLLFAKQLTQYAVCPNC) adopts a C4-type zinc-finger fold.

This sequence belongs to the AccD/PCCB family. Acetyl-CoA carboxylase is a heterohexamer composed of biotin carboxyl carrier protein (AccB), biotin carboxylase (AccC) and two subunits each of ACCase subunit alpha (AccA) and ACCase subunit beta (AccD). Zn(2+) serves as cofactor.

The protein resides in the cytoplasm. It catalyses the reaction N(6)-carboxybiotinyl-L-lysyl-[protein] + acetyl-CoA = N(6)-biotinyl-L-lysyl-[protein] + malonyl-CoA. It functions in the pathway lipid metabolism; malonyl-CoA biosynthesis; malonyl-CoA from acetyl-CoA: step 1/1. In terms of biological role, component of the acetyl coenzyme A carboxylase (ACC) complex. Biotin carboxylase (BC) catalyzes the carboxylation of biotin on its carrier protein (BCCP) and then the CO(2) group is transferred by the transcarboxylase to acetyl-CoA to form malonyl-CoA. The protein is Acetyl-coenzyme A carboxylase carboxyl transferase subunit beta of Limosilactobacillus reuteri subsp. reuteri (strain JCM 1112) (Lactobacillus reuteri).